Reading from the N-terminus, the 392-residue chain is MTAASLDPTAFSLDAASLAARLDAVFDQALRERRLVGAVAIVARHGEILYRRAQGLADREAGRPMREDTLFRLASVTKPIVALAVLRLVARGELALDAPVTRWLPEFRPRLADGSEPLVTIHHLLTHTSGLGYWLLEGAGSVYDRLGISDGIDLRDFDLDENLRRLASAPLSFAPGSGWQYSLALDVLGAVVERATGQPLAAAVDALVAQPLGMRDCGFVSAEPERFAVPYHDGQPEPVRMRDGIEVPLPEGHGAAVRFAPSRVFEPGAYPSGGAGMYGSADDVLRALEAIRANPGFLPETLADAARRDQAGVGAETRGPGWGFGYLSAVLDDPAAAGTPQHAGTLQWGGVYGHSWFVDRALGLSVLLLTNTAYEGMSGPLTIALRDAVYAR.

Serine 75 serves as the catalytic Acyl-ester intermediate.

The protein belongs to the class-A beta-lactamase family.

The protein localises to the cytoplasm. With respect to regulation, strongly inhibited by eserin, NaF, HgCl2, SDS and Triton X-100. Functionally, acts on short-chain (C4-C6) fatty acid esters and triglycerides, including tertiary alcohol esters. Activity on p-nitrophenyl esters is generally higher than on o-nitrophenyl esters. Lacks beta-lactamase activity; it hydrolyzes the ester bond of cephalosporin substrates but there is no opening of the beta-lactam ring observed. In Burkholderia gladioli (Pseudomonas marginata), this protein is Esterase EstB (estB).